Here is a 113-residue protein sequence, read N- to C-terminus: Retrotransposon Gag-like protein 8 (113 aa).

This sequence belongs to the FAM127 family.

This is Retrotransposon Gag-like protein 8 (RTL8A) from Bos taurus (Bovine).